The chain runs to 572 residues: SHUGOSHIN 1 (572 aa).

Residues 59–110 (KHQQQAILISSKENAENLQKENTKLMKVVMERDGIKSDLKKLRIEFQKVQEQ) are a coiled coil. 4 disordered regions span residues 185-221 (DADHEHASGSSNANSLQRNEKANSKRRVSGRKNPANS), 244-285 (KLVS…QTET), 333-352 (ARLKSQEPEPSESFHDSIET), and 484-572 (SRRQ…RGGF). Residues 192-201 (SGSSNANSLQ) show a composition bias toward polar residues. Composition is skewed to basic and acidic residues over residues 244-257 (KLVSDSDNDAENHI), 336-352 (KSQEPEPSESFHDSIET), 523-542 (ELKRESKKKPTGDESEEMRK), and 552-572 (AAEKIKSYKEPSLKEKMRGGF).

This sequence belongs to the shugoshin family.

Its function is as follows. Protects sister chromatid centromere cohesion in meiosis I but not through the protection of the cohesin SYN1. Required with SGO2 for full protection of centromeric cohesion during anaphase I. Required to prevent precocious release of pericentromeric cohesins during meiosis. Not necessary for the maintenance of the synaptonemal complex (SC). Not required for monopolar spindle orientation in meiosis I. The sequence is that of SHUGOSHIN 1 from Arabidopsis thaliana (Mouse-ear cress).